Consider the following 306-residue polypeptide: MKIICLGTSAGLPTKERNTQTTILSLNPLYNEYWMFDCGEAAQHQILHTSIKLGRLTHIFISHLHGDHIFGLPGVLTSRSFQGGQDKKLTLYGPTGLKQFVDTVLTISCSHLNYPLEIIEIDHGDEFVINDIEITVGALKHGIPSFGYRIVMPDTAGNLIKEKLIAEGIAPGPVYKEFKLHEQVTLNGKIYNTKDFKTAGKKGKKLVFFGDTMPCENEVSLAENADVVVHECTYLDGDVELSHKYCHSHIDDVLSLVSSGSVKKLIINHVSNRYTTKDINRLLAEINTKTECEVFIADDFYEYDIE.

Zn(2+)-binding residues include H63, H65, D67, H68, H141, D211, and H269. The active-site Proton acceptor is D67.

The protein belongs to the RNase Z family. As to quaternary structure, homodimer. Requires Zn(2+) as cofactor.

It carries out the reaction Endonucleolytic cleavage of RNA, removing extra 3' nucleotides from tRNA precursor, generating 3' termini of tRNAs. A 3'-hydroxy group is left at the tRNA terminus and a 5'-phosphoryl group is left at the trailer molecule.. Functionally, zinc phosphodiesterase, which displays some tRNA 3'-processing endonuclease activity. Probably involved in tRNA maturation, by removing a 3'-trailer from precursor tRNA. This chain is Ribonuclease Z, found in Macrococcus caseolyticus (strain JCSC5402) (Macrococcoides caseolyticum).